Here is a 310-residue protein sequence, read N- to C-terminus: Porphobilinogen deaminase (310 aa).

Cysteine 243 bears the S-(dipyrrolylmethanemethyl)cysteine mark.

Belongs to the HMBS family. As to quaternary structure, monomer. Dipyrromethane serves as cofactor.

It carries out the reaction 4 porphobilinogen + H2O = hydroxymethylbilane + 4 NH4(+). The protein operates within porphyrin-containing compound metabolism; protoporphyrin-IX biosynthesis; coproporphyrinogen-III from 5-aminolevulinate: step 2/4. Tetrapolymerization of the monopyrrole PBG into the hydroxymethylbilane pre-uroporphyrinogen in several discrete steps. The protein is Porphobilinogen deaminase of Methylobacillus flagellatus (strain ATCC 51484 / DSM 6875 / VKM B-1610 / KT).